The primary structure comprises 907 residues: Protein translocase subunit SecA (907 aa).

Residues Gln87, 105–109 (GEGKT), and Asp513 each bind ATP. Over residues 841–853 (EAQRRAQAEEAAR) the composition is skewed to basic and acidic residues. Residues 841–907 (EAQRRAQAEE…KYKQCHGQIN (67 aa)) are disordered. A compositionally biased stretch (low complexity) spans 854 to 865 (RAQAQHASAQSQ). Over residues 872–887 (EGHHQPVVRDERKVGR) the composition is skewed to basic and acidic residues. Positions 891, 893, 902, and 903 each coordinate Zn(2+).

The protein belongs to the SecA family. As to quaternary structure, monomer and homodimer. Part of the essential Sec protein translocation apparatus which comprises SecA, SecYEG and auxiliary proteins SecDF-YajC and YidC. It depends on Zn(2+) as a cofactor.

It is found in the cell inner membrane. It localises to the cytoplasm. It catalyses the reaction ATP + H2O + cellular proteinSide 1 = ADP + phosphate + cellular proteinSide 2.. Part of the Sec protein translocase complex. Interacts with the SecYEG preprotein conducting channel. Has a central role in coupling the hydrolysis of ATP to the transfer of proteins into and across the cell membrane, serving both as a receptor for the preprotein-SecB complex and as an ATP-driven molecular motor driving the stepwise translocation of polypeptide chains across the membrane. The polypeptide is Protein translocase subunit SecA (Vibrio vulnificus (strain YJ016)).